The sequence spans 608 residues: MLRRIVNTGTKRLFRVPPRSSALCFSRRLSDQTKEVYTKINDTKDPARNQFFQYTWGSWMKNDKLERARRQTRFSIEGLSKFAKDFKPQDAALGKPEHLTNGTVALKNNWTKEILGETGHDVKSIASIHEGKHHRIYKVTLANDRQLVLRIPYRLESDYAIENKINSEVATLDFLALKLKLNVPRVLAYGPTRTNILQTPFILMEYIEGDLLMKQWNPLVPDSETSEEELKKVIDPIMEFQDKLLSVTFNRFGSLYFFDDVSAANQKVVPYDEEDNLLKDRWRIGPSTESVFSKNKKQLASQKISQFNGPWDSVEKMLKDLAEVQVESLRFRLGLAQADSSNQVEDVDQLKKQIQTFENFKIISDKLLNPSSPAIKNVEELFKPRLFVPDLDPLNVIVEQKSSKPFFIDFEHTVIKPFILASYPAFVAYQGTKLYNLEEEIPGFKDMDDVEKQQYEFMYYKTRNERLWEFALNNKRHDLIAVASPHIKLLKAPYLQVVNCKTDKDFMFIENAIIQLQAMWEAYVANQICNSTTPEFPIEYTAEYLDEHQSDLENYQLEVASTPFAATGGWVPQDMFDVLKEQNILVEDENGNYKIEADAALKNPPKDP.

The N-terminal 21 residues, 1–21 (MLRRIVNTGTKRLFRVPPRSS), are a transit peptide targeting the mitochondrion.

The protein belongs to the AIM9 family.

It is found in the mitochondrion. This is Altered inheritance of mitochondria protein 9, mitochondrial (AIM9) from Clavispora lusitaniae (strain ATCC 42720) (Yeast).